We begin with the raw amino-acid sequence, 231 residues long: AA9 family lytic polysaccharide monooxygenase C (231 aa).

An N-terminal signal peptide occupies residues 1 to 18 (MKSGLLFTTASLALTASA). Residue His-19 coordinates Cu(2+). The cysteines at positions 60 and 179 are disulfide-linked. Asn-69 and Asn-143 each carry an N-linked (GlcNAc...) asparagine glycan. Positions 165 and 174 each coordinate O2. Cu(2+) is bound at residue Tyr-176.

This sequence belongs to the polysaccharide monooxygenase AA9 family. Cu(2+) serves as cofactor.

The protein resides in the secreted. It carries out the reaction [(1-&gt;4)-beta-D-glucosyl]n+m + reduced acceptor + O2 = 4-dehydro-beta-D-glucosyl-[(1-&gt;4)-beta-D-glucosyl]n-1 + [(1-&gt;4)-beta-D-glucosyl]m + acceptor + H2O.. Functionally, lytic polysaccharide monooxygenase (LPMO) that depolymerizes crystalline and amorphous polysaccharides via the oxidation of scissile alpha- or beta-(1-4)-glycosidic bonds, yielding C1 oxidation products. Catalysis by LPMOs requires the reduction of the active-site copper from Cu(II) to Cu(I) by a reducing agent and H(2)O(2) or O(2) as a cosubstrate. In Emericella nidulans (strain FGSC A4 / ATCC 38163 / CBS 112.46 / NRRL 194 / M139) (Aspergillus nidulans), this protein is AA9 family lytic polysaccharide monooxygenase C.